Consider the following 515-residue polypeptide: MVSIPEYYEGKNILLTGATGFLGKVLLEKLLRSCPRVNSVYVLVRQKAGQTPQERVEEILSSKLFDRLRDENPDFREKIIAINSELTQPKLALSEEDKEIIIDSTNVIFHCAATVRFNENLRDAVQLNVIATRQLILLAQQMKNLEVFMHVSTAYAYCNRKHIDEVVYPPPVDPKKLIDSLEWMDDGLVNDITPKLIGDRPNTYIYTKALAEYVVQQEGAKLNVAIVRPSIVGASWKEPFPGWIDNFNGPSGLFIAAGKGILRTMRASNNALADLVPVDVVVNTSLAAAWYSGVNRPRNIMVYNCTTGSTNPFHWGEVEYHVISTFKRNPLEQAFRRPNVNLTSNHLLYHYWIAVSHKAPAFLYDIYLRMTGRSPRMMKTITRLHKAMVFLEYFTSNSWVWNTDNVNMLMNQLNPEDKKTFNIDVRQLHWAEYIENYCMGTKKYVLNEEMSGLPAARKHLNKLRNIRYGFNTILVILIWRIFIARSQMARNIWYFVVSLCYKFLSYFRASSTMRY.

Residues 1 to 465 (MVSIPEYYEG…ARKHLNKLRN (465 aa)) are Cytoplasmic-facing. Residues 451-507 (SGLPAARKHLNKLRNIRYGFNTILVILIWRIFIARSQMARNIWYFVVSLCYKFLSYF) are necessary and sufficient for PEX19-mediated localization into peroxisome membrane. Residues 466–483 (IRYGFNTILVILIWRIFI) traverse the membrane as a helical segment. Topologically, residues 484–515 (ARSQMARNIWYFVVSLCYKFLSYFRASSTMRY) are peroxisomal.

This sequence belongs to the fatty acyl-CoA reductase family. Interacts with PEX19; PEX19 mediates the targeting of FAR1 to peroxisomes. As to expression, widely expressed. Expressed in all tissues examined. Highest expression seen in preputial gland. Expressed in the brain where large quantities of ether lipids are synthesized.

Its subcellular location is the peroxisome membrane. It catalyses the reaction a long-chain fatty acyl-CoA + 2 NADPH + 2 H(+) = a long-chain primary fatty alcohol + 2 NADP(+) + CoA. It carries out the reaction hexadecanoyl-CoA + 2 NADPH + 2 H(+) = hexadecan-1-ol + 2 NADP(+) + CoA. The enzyme catalyses octadecanoyl-CoA + 2 NADPH + 2 H(+) = octadecan-1-ol + 2 NADP(+) + CoA. The catalysed reaction is (9Z)-octadecenoyl-CoA + 2 NADPH + 2 H(+) = (9Z)-octadecen-1-ol + 2 NADP(+) + CoA. It catalyses the reaction (9Z,12Z)-octadecadienoyl-CoA + 2 NADPH + 2 H(+) = (9Z,12Z)-octadecadien-1-ol + 2 NADP(+) + CoA. It carries out the reaction eicosanoyl-CoA + 2 NADPH + 2 H(+) = eicosan-1-ol + 2 NADP(+) + CoA. The enzyme catalyses 16-methylheptadecanoyl-CoA + 2 NADPH + 2 H(+) = 16-methylheptadecan-1-ol + 2 NADP(+) + CoA. The catalysed reaction is 18-methylnonadecanoyl-CoA + 2 NADPH + 2 H(+) = 18-methylnonadecan-1-ol + 2 NADP(+) + CoA. In terms of biological role, catalyzes the reduction of saturated and unsaturated C16 or C18 fatty acyl-CoA to fatty alcohols. It plays an essential role in the production of ether lipids/plasmalogens which synthesis requires fatty alcohols. In parallel, it is also required for wax monoesters production since fatty alcohols also constitute a substrate for their synthesis. The polypeptide is Fatty acyl-CoA reductase 1 (Mus musculus (Mouse)).